Here is a 118-residue protein sequence, read N- to C-terminus: MARIAGINIPDHKHTVIALTSIFGIGKTRSQAICAATGIAEDVKISELSEEQIDKLRDEVAKFVVEGDLRREVTLSIKRLMDLGTYRGLRHRRGLPVRGQRTKTNARTRKGPRKPIKK.

The tract at residues 92–118 (RRGLPVRGQRTKTNARTRKGPRKPIKK) is disordered.

It belongs to the universal ribosomal protein uS13 family. Part of the 30S ribosomal subunit. Forms a loose heterodimer with protein S19. Forms two bridges to the 50S subunit in the 70S ribosome.

In terms of biological role, located at the top of the head of the 30S subunit, it contacts several helices of the 16S rRNA. In the 70S ribosome it contacts the 23S rRNA (bridge B1a) and protein L5 of the 50S subunit (bridge B1b), connecting the 2 subunits; these bridges are implicated in subunit movement. Contacts the tRNAs in the A and P-sites. This Pectobacterium carotovorum subsp. carotovorum (strain PC1) protein is Small ribosomal subunit protein uS13.